The sequence spans 21 residues: Major outer membrane protein (21 aa).

In terms of assembly, disulfide bond interactions within and between MOMP molecules and other components form high molecular-weight oligomers.

Its subcellular location is the cell outer membrane. Functionally, structural rigidity of the outer membrane of elementary bodies and porin forming, permitting diffusion of solutes through the intracellular reticulate body membrane. In Actinobacillus suis, this protein is Major outer membrane protein.